The chain runs to 362 residues: 2-aminoethylphosphonate--pyruvate transaminase (362 aa).

An N6-(pyridoxal phosphate)lysine modification is found at lysine 193.

The protein belongs to the class-V pyridoxal-phosphate-dependent aminotransferase family. PhnW subfamily. In terms of assembly, homodimer. The cofactor is pyridoxal 5'-phosphate.

The catalysed reaction is (2-aminoethyl)phosphonate + pyruvate = phosphonoacetaldehyde + L-alanine. Functionally, involved in phosphonate degradation. The protein is 2-aminoethylphosphonate--pyruvate transaminase of Bacteroides fragilis (strain YCH46).